A 369-amino-acid polypeptide reads, in one-letter code: Gibberellin 3-beta-dioxygenase 2-3 (369 aa).

Positions 205-306 (MTATMHLNWY…RISLGYFLGP (102 aa)) constitute a Fe2OG dioxygenase domain. Residues H229, D231, and H287 each contribute to the Fe cation site. Residue R297 is part of the active site.

Belongs to the iron/ascorbate-dependent oxidoreductase family. GA3OX subfamily. L-ascorbate serves as cofactor. Requires Fe cation as cofactor.

The enzyme catalyses gibberellin A20 + 2-oxoglutarate + O2 = gibberellin A1 + succinate + CO2. Functionally, converts the inactive gibberellin precursors GA9 and GA20 in the bioactives gibberellins GA4 and GA1. The protein is Gibberellin 3-beta-dioxygenase 2-3 (GA3ox2-3) of Triticum aestivum (Wheat).